We begin with the raw amino-acid sequence, 86 residues long: MAHKKAAGSTRNGRDSESKRLGVKRYGGESVSAGSIIVRQRGTRFHAGSNVGIGKDHTLFAKAEGQVKFETKGPQNRKFVSIVPAA.

Positions 1-26 (MAHKKAAGSTRNGRDSESKRLGVKRY) are disordered.

Belongs to the bacterial ribosomal protein bL27 family.

This is Large ribosomal subunit protein bL27 from Marinobacter nauticus (strain ATCC 700491 / DSM 11845 / VT8) (Marinobacter aquaeolei).